The primary structure comprises 541 residues: Chaperonin GroEL 2 (541 aa).

ATP-binding positions include 29–32 (TLGP), 86–90 (DGTTT), glycine 413, 477–479 (NAA), and aspartate 493.

The protein belongs to the chaperonin (HSP60) family. In terms of assembly, forms a cylinder of 14 subunits composed of two heptameric rings stacked back-to-back. Interacts with the co-chaperonin GroES.

The protein localises to the cytoplasm. The catalysed reaction is ATP + H2O + a folded polypeptide = ADP + phosphate + an unfolded polypeptide.. In terms of biological role, together with its co-chaperonin GroES, plays an essential role in assisting protein folding. The GroEL-GroES system forms a nano-cage that allows encapsulation of the non-native substrate proteins and provides a physical environment optimized to promote and accelerate protein folding. The sequence is that of Chaperonin GroEL 2 from Nocardioides sp. (strain ATCC BAA-499 / JS614).